Here is a 309-residue protein sequence, read N- to C-terminus: Protein FdhE homolog (309 aa).

Belongs to the FdhE family.

It is found in the cytoplasm. In terms of biological role, necessary for formate dehydrogenase activity. This Citrobacter koseri (strain ATCC BAA-895 / CDC 4225-83 / SGSC4696) protein is Protein FdhE homolog.